A 569-amino-acid polypeptide reads, in one-letter code: Endonuclease/exonuclease/phosphatase family domain-containing protein 1 (569 aa).

A disordered region spans residues 1–20; it reads MGSTLGCHRSIPRDPSDLSH. The N-myristoyl glycine moiety is linked to residue glycine 2. The span at 11–20 shows a compositional bias: basic and acidic residues; it reads IPRDPSDLSH. 3 positions are modified to phosphoserine: serine 16, serine 21, and serine 25. Positions 38 to 67 constitute a HhH domain; sequence ERLNINTATEEELMTLPGVTRAVARSIVEY. Phosphoserine is present on residues serine 106, serine 110, serine 160, and serine 173. The tract at residues 200-225 is disordered; the sequence is SRPPSTHTNGGLTFTAKPHPSPTSLS. Over residues 202-211 the composition is skewed to polar residues; sequence PPSTHTNGGL. The residue at position 265 (threonine 265) is a Phosphothreonine. A Phosphoserine modification is found at serine 428. The tract at residues 545-569 is disordered; it reads SKKDAPRNGSGVALERSEANIKHER. The span at 559–569 shows a compositional bias: basic and acidic residues; sequence ERSEANIKHER.

The sequence is that of Endonuclease/exonuclease/phosphatase family domain-containing protein 1 (EEPD1) from Homo sapiens (Human).